An 80-amino-acid polypeptide reads, in one-letter code: FXYD domain-containing ion transport regulator 7 (80 aa).

The Extracellular segment spans residues Met1–Tyr22. O-linked (GlcNAc) threonine glycosylation is found at Thr3, Thr5, and Thr9. The chain crosses the membrane as a helical span at residues Ala23 to Leu45. The Cytoplasmic segment spans residues Ser46–Val80. The interval Asp55–Val80 is disordered. Ser73 is modified (phosphoserine).

It belongs to the FXYD family. As to quaternary structure, regulatory subunit of the sodium/potassium-transporting ATPase which is composed of a catalytic alpha subunit, a non-catalytic beta subunit and an additional regulatory subunit. The regulatory subunit, a member of the FXYD protein family, modulates the enzymatic activity in a tissue- and isoform-specific way by changing affinities of the Na+/K+-ATPase toward Na(+), K(+) or ATP. Post-translationally, O-glycosylated; required for stabilization and translocation to the plasma membrane.

The protein resides in the cell membrane. Its function is as follows. Associates with and regulates the activity of the sodium/potassium-transporting ATPase (NKA) which catalyzes the hydrolysis of ATP coupled with the exchange of Na(+) and K(+) ions across the plasma membrane. Reduces the apparent affinity for external K(+), an effect that depends on the presence of external Na(+) and voltage. Increases the apparent affinity for intracellular Na(+). The chain is FXYD domain-containing ion transport regulator 7 (Fxyd7) from Mus musculus (Mouse).